The chain runs to 627 residues: MIFLATLPLFWIMISASRGGHWGAWMPSTISAFEGTCVSIPCRFDFPDELRPAVVHGVWYFNSPYPKNYPPVVFKSRTQVVHESFQGRSRLLGDLGLRNCTLLLSTLSPELGGKYYFRGDLGGYNQYTFSEHSVLDIVNTPNIVVPPEVVAGTEVEVSCMVPDNCPELRPELSWLGHEGLGEPTVLGRLREDEGTWVQVSLLHFVPTREANGHRLGCQAAFPNTTLQFEGYASLDVKYPPVIVEMNSSVEAIEGSHVSLLCGADSNPPPLLTWMRDGMVLREAVAKSLYLDLEEVTPGEDGVYACLAENAYGQDNRTVELSVMYAPWKPTVNGTVVAVEGETVSILCSTQSNPDPILTIFKEKQILATVIYESQLQLELPAVTPEDDGEYWCVAENQYGQRATAFNLSVEFAPIILLESHCAAARDTVQCLCVVKSNPEPSVAFELPSRNVTVNETEREFVYSERSGLLLTSILTIRGQAQAPPRVICTSRNLYGTQSLELPFQGAHRLMWAKIGPVGAVVAFAILIAIVCYITQTRRKKNVTESSSFSGGDNPHVLYSPEFRISGAPDKYESEKQRLGSERRLLGLRGESPELDLSYSHSDLGKRPTKDSYTLTEELAEYAEIRVK.

Positions 1-19 (MIFLATLPLFWIMISASRG) are cleaved as a signal peptide. The interval 20 to 325 (GHWGAWMPST…RTVELSVMYA (306 aa)) is interaction with RTN4R and RTN4RL2. Over 20 to 516 (GHWGAWMPST…HRLMWAKIGP (497 aa)) the chain is Extracellular. C-linked (Man) tryptophan glycosylation is present at Trp-22. The region spanning 22–120 (WGAWMPSTIS…LGGKYYFRGD (99 aa)) is the Ig-like V-type domain. Intrachain disulfides connect Cys-37/Cys-165, Cys-42/Cys-100, and Cys-159/Cys-217. Position 65–67 (65–67 (YPK)) interacts with a ganglioside GT1b (d18:1(4E)). An N-linked (GlcNAc...) asparagine glycan is attached at Asn-99. Residues Arg-118 and 124–128 (YNQYT) each bind a ganglioside GT1b (d18:1(4E)). Ig-like C2-type domains lie at 139–237 (NTPN…LDVK), 241–325 (VIVE…VMYA), 327–412 (WKPT…VEFA), and 413–508 (PIIL…GAHR). N-linked (GlcNAc...) asparagine glycans are attached at residues Asn-223 and Asn-246. Cys-261 and Cys-305 are disulfide-bonded. N-linked (GlcNAc...) asparagine glycans are attached at residues Asn-315 and Asn-332. Cys-347 and Cys-392 are disulfide-bonded. N-linked (GlcNAc...) asparagine glycosylation occurs at Asn-406. Intrachain disulfides connect Cys-421/Cys-430 and Cys-432/Cys-488. 2 N-linked (GlcNAc...) asparagine glycosylation sites follow: Asn-450 and Asn-454. Residues 517 to 536 (VGAVVAFAILIAIVCYITQT) form a helical membrane-spanning segment. Cys-531 carries the S-palmitoyl cysteine lipid modification. At 537–627 (RRKKNVTESS…LAEYAEIRVK (91 aa)) the chain is on the cytoplasmic side. A phosphoserine mark is found at Ser-545, Ser-547, Ser-549, and Ser-591. The interval 578–627 (LGSERRLLGLRGESPELDLSYSHSDLGKRPTKDSYTLTEELAEYAEIRVK) is required for normal axon myelination in the central nervous system.

Belongs to the immunoglobulin superfamily. SIGLEC (sialic acid binding Ig-like lectin) family. Monomer and homodimer. Interacts (via the first three N-terminal Ig-like domains) with RTN4R and RTN4RL2. Interacts with isoform 2 of BSG. Post-translationally, N-glycosylated. In terms of processing, phosphorylated on tyrosine residues. Ubiquitinated, leading to proteasomal degradation. As to expression, detected in the myelin tract in brain, especially in the corpus callosum and in peripheral nerve. Expressed by myelinating glial cells in the central and peripheral nervous system. Detected in oligodendrocyte processes before formation of compact myelin. Restricted to the periaxonal space after myelination. Isoform S-MAG is the predominant isoform in CNS and PNS of the adult (at protein level).

The protein localises to the cell membrane. It localises to the membrane raft. In terms of biological role, adhesion molecule that mediates interactions between myelinating cells and neurons by binding to neuronal sialic acid-containing gangliosides and to the glycoproteins RTN4R and RTN4RL2. Not required for initial myelination, but seems to play a role in the maintenance of normal axon myelination. Protects motoneurons against apoptosis, also after injury; protection against apoptosis is probably mediated via interaction with neuronal RTN4R and RTN4RL2. Required to prevent degeneration of myelinated axons in adults; this probably depends on binding to gangliosides on the axon cell membrane. Negative regulator of neurite outgrowth that inhibits axon longitudinal growth. Negative regulator of neurite outgrowth; in dorsal root ganglion neurons the inhibition is mediated primarily via binding to neuronal RTN4R or RTN4RL2 and to a lesser degree via binding to neuronal gangliosides. In cerebellar granule cells the inhibition is mediated via binding to neuronal gangliosides. In sensory neurons, inhibition of neurite extension depends only partially on RTN4R, RTN4RL2 and gangliosides. Inhibits axon outgrowth by binding to RTN4R. Preferentially binds to alpha-2,3-linked sialic acid. Binds ganglioside Gt1b. In Mus musculus (Mouse), this protein is Myelin-associated glycoprotein (Mag).